The following is a 192-amino-acid chain: Late embryogenesis abundant protein 47 (192 aa).

The short motif at 5–9 (QLQKP) is the Nuclear localization signal (NLS) element. SMP domains lie at 68-125 (ITIG…LNAR) and 133-190 (TTLA…RINQ). The tract at residues 146–174 (LPSDKAATRKDAEGVTGAEMRNDPHLTTY) is disordered. Positions 147 to 158 (PSDKAATRKDAE) are enriched in basic and acidic residues.

This sequence belongs to the LEA type SMP family.

Its subcellular location is the cytoplasm. It is found in the nucleus. Functionally, LEA proteins are late embryonic proteins abundant in higher plant seed embryos. The function of those proteins is not known. In Arabidopsis thaliana (Mouse-ear cress), this protein is Late embryogenesis abundant protein 47.